The chain runs to 466 residues: Ribulose bisphosphate carboxylase large chain (466 aa).

Position 4 is an N6,N6,N6-trimethyllysine (K4). Substrate is bound by residues N113 and T163. The Proton acceptor role is filled by K165. Residue K167 participates in substrate binding. The Mg(2+) site is built by K191, D193, and E194. N6-carboxylysine is present on K191. H284 (proton acceptor) is an active-site residue. Residues R285, H317, and S369 each coordinate substrate.

This sequence belongs to the RuBisCO large chain family. Type I subfamily. In terms of assembly, heterohexadecamer of 8 large chains and 8 small chains; disulfide-linked. The disulfide link is formed within the large subunit homodimers. It depends on Mg(2+) as a cofactor. The disulfide bond which can form in the large chain dimeric partners within the hexadecamer appears to be associated with oxidative stress and protein turnover.

It localises to the plastid. The protein localises to the chloroplast. It catalyses the reaction 2 (2R)-3-phosphoglycerate + 2 H(+) = D-ribulose 1,5-bisphosphate + CO2 + H2O. The enzyme catalyses D-ribulose 1,5-bisphosphate + O2 = 2-phosphoglycolate + (2R)-3-phosphoglycerate + 2 H(+). RuBisCO catalyzes two reactions: the carboxylation of D-ribulose 1,5-bisphosphate, the primary event in carbon dioxide fixation, as well as the oxidative fragmentation of the pentose substrate in the photorespiration process. Both reactions occur simultaneously and in competition at the same active site. In Justicia odora (Water willow), this protein is Ribulose bisphosphate carboxylase large chain.